Reading from the N-terminus, the 360-residue chain is Uroporphyrinogen decarboxylase (360 aa).

Substrate is bound by residues 31-35, aspartate 81, tyrosine 157, threonine 212, and histidine 333; that span reads RQAGR.

This sequence belongs to the uroporphyrinogen decarboxylase family. In terms of assembly, homodimer.

It is found in the cytoplasm. It catalyses the reaction uroporphyrinogen III + 4 H(+) = coproporphyrinogen III + 4 CO2. The protein operates within porphyrin-containing compound metabolism; protoporphyrin-IX biosynthesis; coproporphyrinogen-III from 5-aminolevulinate: step 4/4. Its function is as follows. Catalyzes the decarboxylation of four acetate groups of uroporphyrinogen-III to yield coproporphyrinogen-III. The sequence is that of Uroporphyrinogen decarboxylase from Janthinobacterium sp. (strain Marseille) (Minibacterium massiliensis).